The primary structure comprises 297 residues: 4-hydroxy-tetrahydrodipicolinate synthase (297 aa).

Thr49 contributes to the pyruvate binding site. Tyr137 serves as the catalytic Proton donor/acceptor. Lys166 functions as the Schiff-base intermediate with substrate in the catalytic mechanism. Ile208 provides a ligand contact to pyruvate.

It belongs to the DapA family. In terms of assembly, homotetramer; dimer of dimers.

It localises to the cytoplasm. The enzyme catalyses L-aspartate 4-semialdehyde + pyruvate = (2S,4S)-4-hydroxy-2,3,4,5-tetrahydrodipicolinate + H2O + H(+). It participates in amino-acid biosynthesis; L-lysine biosynthesis via DAP pathway; (S)-tetrahydrodipicolinate from L-aspartate: step 3/4. Its function is as follows. Catalyzes the condensation of (S)-aspartate-beta-semialdehyde [(S)-ASA] and pyruvate to 4-hydroxy-tetrahydrodipicolinate (HTPA). The chain is 4-hydroxy-tetrahydrodipicolinate synthase from Phocaeicola vulgatus (strain ATCC 8482 / DSM 1447 / JCM 5826 / CCUG 4940 / NBRC 14291 / NCTC 11154) (Bacteroides vulgatus).